The sequence spans 358 residues: Putative hydrogenase expression/formation protein MJ0993 (358 aa).

Fe cation is bound by residues Cys-33, Cys-61, and Cys-64.

This sequence belongs to the HypD family.

This is Putative hydrogenase expression/formation protein MJ0993 from Methanocaldococcus jannaschii (strain ATCC 43067 / DSM 2661 / JAL-1 / JCM 10045 / NBRC 100440) (Methanococcus jannaschii).